A 279-amino-acid polypeptide reads, in one-letter code: Digeranylgeranylglyceryl phosphate synthase (279 aa).

8 helical membrane-spanning segments follow: residues 5 to 25 (GFFAITRPANSVVAGLAAIVA), 27 to 47 (LIATGTLVYGVLLLMAVVLLV), 90 to 110 (FLLGLAVSVFTTPLCMGIALV), 127 to 147 (FFGNAAVAFLSASIFLFGGAY), 148 to 168 (AGWHALLDMLPIAAITFLAML), 198 to 218 (KTALIAFACTAFAIAASAVPY), 219 to 239 (LWWGGWYLAGIAAVDLVILFA), and 259 to 279 (TLLKLGMFASLVVFTLSAVFL).

It belongs to the UbiA prenyltransferase family. DGGGP synthase subfamily. Requires Mg(2+) as cofactor.

The protein resides in the cell membrane. It carries out the reaction sn-3-O-(geranylgeranyl)glycerol 1-phosphate + (2E,6E,10E)-geranylgeranyl diphosphate = 2,3-bis-O-(geranylgeranyl)-sn-glycerol 1-phosphate + diphosphate. It participates in membrane lipid metabolism; glycerophospholipid metabolism. Prenyltransferase that catalyzes the transfer of the geranylgeranyl moiety of geranylgeranyl diphosphate (GGPP) to the C2 hydroxyl of (S)-3-O-geranylgeranylglyceryl phosphate (GGGP). This reaction is the second ether-bond-formation step in the biosynthesis of archaeal membrane lipids. The chain is Digeranylgeranylglyceryl phosphate synthase from Methanoregula boonei (strain DSM 21154 / JCM 14090 / 6A8).